The sequence spans 379 residues: Dual-specificity RNA methyltransferase RlmN (379 aa).

E96 functions as the Proton acceptor in the catalytic mechanism. The region spanning 102–342 (TDDRGTLCVS…TRTTRGDDID (241 aa)) is the Radical SAM core domain. Cysteines 109 and 345 form a disulfide. [4Fe-4S] cluster is bound by residues C116, C120, and C123. S-adenosyl-L-methionine contacts are provided by residues 170-171 (GE), S202, 224-226 (SLH), and N302. The active-site S-methylcysteine intermediate is C345.

It belongs to the radical SAM superfamily. RlmN family. It depends on [4Fe-4S] cluster as a cofactor.

The protein resides in the cytoplasm. The enzyme catalyses adenosine(2503) in 23S rRNA + 2 reduced [2Fe-2S]-[ferredoxin] + 2 S-adenosyl-L-methionine = 2-methyladenosine(2503) in 23S rRNA + 5'-deoxyadenosine + L-methionine + 2 oxidized [2Fe-2S]-[ferredoxin] + S-adenosyl-L-homocysteine. It catalyses the reaction adenosine(37) in tRNA + 2 reduced [2Fe-2S]-[ferredoxin] + 2 S-adenosyl-L-methionine = 2-methyladenosine(37) in tRNA + 5'-deoxyadenosine + L-methionine + 2 oxidized [2Fe-2S]-[ferredoxin] + S-adenosyl-L-homocysteine. Specifically methylates position 2 of adenine 2503 in 23S rRNA and position 2 of adenine 37 in tRNAs. m2A2503 modification seems to play a crucial role in the proofreading step occurring at the peptidyl transferase center and thus would serve to optimize ribosomal fidelity. The polypeptide is Dual-specificity RNA methyltransferase RlmN (Pseudomonas entomophila (strain L48)).